A 305-amino-acid polypeptide reads, in one-letter code: Glycine--tRNA ligase alpha subunit (305 aa).

Belongs to the class-II aminoacyl-tRNA synthetase family. Tetramer of two alpha and two beta subunits.

It is found in the cytoplasm. The catalysed reaction is tRNA(Gly) + glycine + ATP = glycyl-tRNA(Gly) + AMP + diphosphate. The protein is Glycine--tRNA ligase alpha subunit of Heliobacterium modesticaldum (strain ATCC 51547 / Ice1).